The following is a 36-amino-acid chain: Mu-agatoxin-Aa1a (36 aa).

4 disulfides stabilise this stretch: Cys2–Cys17, Cys9–Cys22, Cys16–Cys32, and Cys24–Cys30. Asn36 is modified (asparagine amide).

The protein belongs to the neurotoxin 07 (Beta/delta-agtx) family. 04 (aga-5) subfamily. As to expression, expressed by the venom gland.

The protein localises to the secreted. Its function is as follows. Insecticidal neurotoxin that induces an irreversible spastic paralysis when injected into insects. Modifies presynaptic voltage-gated sodium channels (Nav), causing them to open at the normal resting potential of the nerve. This leads to spontaneous release of neurotransmitter and repetitive action potentials in motor neurons. The chain is Mu-agatoxin-Aa1a from Agelenopsis aperta (North American funnel-web spider).